The sequence spans 1733 residues: Gag-Pol polyprotein (1733 aa).

A lipid anchor (N-myristoyl glycine; by host) is attached at glycine 2. A PTAP/PSAP motif motif is present at residues proline 109–proline 112. Over residues proline 112 to serine 121 the composition is skewed to pro residues. 2 disordered regions span residues proline 112–leucine 196 and leucine 202–glycine 221. The LYPX(n)L motif signature appears at leucine 128 to leucine 132. Residues aspartate 159–proline 170 are compositionally biased toward pro residues. Residues proline 160–tyrosine 163 carry the PPXY motif motif. Position 190 is a phosphoserine; by host (serine 190). Residues glycine 343–valine 391 form an interaction with host PIAS4 region. An interaction with host UBE2I region spans residues isoleucine 428–glutamate 433. 2 stretches are compositionally biased toward basic and acidic residues: residues arginine 432–arginine 464 and lysine 484–glutamine 496. Disordered stretches follow at residues arginine 432–glutamine 496 and tryptophan 511–isoleucine 550. The stretch at glutamate 436–leucine 476 forms a coiled coil. The CCHC-type zinc finger occupies aspartate 500–lysine 517. In terms of domain architecture, Peptidase A2 spans valine 559 to leucine 629. Residue aspartate 564 is the Protease; shared with dimeric partner of the active site. The Reverse transcriptase domain occupies leucine 739 to leucine 930. Mg(2+) contacts are provided by aspartate 807, aspartate 881, aspartate 882, aspartate 1181, glutamate 1219, aspartate 1240, and aspartate 1310. Residues proline 1172–threonine 1318 form the RNase H type-1 domain. An HHCC-type zinc finger spans residues histidine 1385–cysteine 1425. The region spanning arginine 1442 to proline 1600 is the Integrase catalytic domain. Mg(2+)-binding residues include aspartate 1453 and aspartate 1512.

As to quaternary structure, homohexamer; further associates as homomultimer. The virus core is composed of a lattice formed from hexagonal rings, each containing six capsid monomers. Interacts with mouse UBE2I and mouse PIAS4. In terms of assembly, interacts (via PPXY motif) with host NEDD4. Interacts (via PSAP motif) with host TSG101. Interacts (via LYPX(n)L motif) with host PDCD6IP. The reverse transcriptase is a monomer (Potential). Interacts (via RNase domains) with host release factor ETF1; this interaction is essential for translational readthrough of amber codon between viral gag and pol genes, as well as for viral replication. As to quaternary structure, homodimer. Mg(2+) serves as cofactor. Post-translationally, ubiquitinated by ITCH. Gag can recruit the ubiquitin ligase Itch in an L domain-independent manner to facilitate virus release via a mechanism that involves Gag ubiquitination. In terms of processing, specific enzymatic cleavages by the viral protease yield mature proteins. The protease is released by autocatalytic cleavage. The polyprotein is cleaved during and after budding, this process is termed maturation. Sumoylated; which is required for virus replication. Post-translationally, phosphorylated on serine residues.

The protein resides in the virion. Its subcellular location is the host cell membrane. It localises to the host late endosome membrane. The protein localises to the host endosome. It is found in the host multivesicular body. The protein resides in the host cytoplasm. The enzyme catalyses DNA(n) + a 2'-deoxyribonucleoside 5'-triphosphate = DNA(n+1) + diphosphate. It catalyses the reaction Endonucleolytic cleavage to 5'-phosphomonoester.. With respect to regulation, most efficiently inhibited by Amprenavir, which is able to block Gag-Pol processing in infected cells. Plays a role in budding and is processed by the viral protease during virion maturation outside the cell. During budding, it recruits, in a PPXY-dependent or independent manner, Nedd4-like ubiquitin ligases that conjugate ubiquitin molecules to Gag-Pol, or to Gag-Pol binding host factors. Interaction with HECT ubiquitin ligases probably links the viral protein to the host ESCRT pathway and facilitates release. In terms of biological role, targets Gag and gag-pol polyproteins to the plasma membrane via a multipartite membrane binding signal, that includes its myristoylated N-terminus. Also mediates nuclear localization of the pre-integration complex. Its function is as follows. Constituent of the pre-integration complex (PIC) which tethers the latter to mitotic chromosomes. This allows the integration of the viral genome into the host DNA. Functionally, forms the spherical core of the virion that encapsulates the genomic RNA-nucleocapsid complex. Involved in the packaging and encapsidation of two copies of the genome. Binds with high affinity to conserved UCUG elements within the packaging signal, located near the 5'-end of the genome. This binding is dependent on genome dimerization. Acts as a nucleic acid chaperone which is involved in rearrangement of nucleic acid secondary structures during gRNA retrotranscription. In terms of biological role, the aspartyl protease mediates proteolytic cleavages of Gag and Gag-Pol polyproteins during or shortly after the release of the virion from the plasma membrane. Cleavages take place as an ordered, step-wise cascade to yield mature proteins. This process is called maturation. Displays maximal activity during the budding process just prior to particle release from the cell (Potential). Cleaves the translation initiation factor eIF4G leading to the inhibition of host cap-dependent translation. Its function is as follows. RT is a multifunctional enzyme that converts the viral dimeric RNA genome into dsDNA in the cytoplasm, shortly after virus entry into the cell. This enzyme displays a DNA polymerase activity that can copy either DNA or RNA templates, and a ribonuclease H (RNase H) activity that cleaves the RNA strand of RNA-DNA heteroduplexes in a partially processive 3' to 5' endonucleasic mode. Conversion of viral genomic RNA into dsDNA requires many steps. A tRNA binds to the primer-binding site (PBS) situated at the 5' end of the viral RNA. RT uses the 3' end of the tRNA primer to perform a short round of RNA-dependent minus-strand DNA synthesis. The reading proceeds through the U5 region and ends after the repeated (R) region which is present at both ends of viral RNA. The portion of the RNA-DNA heteroduplex is digested by the RNase H, resulting in a ssDNA product attached to the tRNA primer. This ssDNA/tRNA hybridizes with the identical R region situated at the 3' end of viral RNA. This template exchange, known as minus-strand DNA strong stop transfer, can be either intra- or intermolecular. RT uses the 3' end of this newly synthesized short ssDNA to perform the RNA-dependent minus-strand DNA synthesis of the whole template. RNase H digests the RNA template except for a polypurine tract (PPT) situated at the 5' end of the genome. It is not clear if both polymerase and RNase H activities are simultaneous. RNase H probably can proceed both in a polymerase-dependent (RNA cut into small fragments by the same RT performing DNA synthesis) and a polymerase-independent mode (cleavage of remaining RNA fragments by free RTs). Secondly, RT performs DNA-directed plus-strand DNA synthesis using the PPT that has not been removed by RNase H as primers. PPT and tRNA primers are then removed by RNase H. The 3' and 5' ssDNA PBS regions hybridize to form a circular dsDNA intermediate. Strand displacement synthesis by RT to the PBS and PPT ends produces a blunt ended, linear dsDNA copy of the viral genome that includes long terminal repeats (LTRs) at both ends. Functionally, catalyzes viral DNA integration into the host chromosome, by performing a series of DNA cutting and joining reactions. This enzyme activity takes place after virion entry into a cell and reverse transcription of the RNA genome in dsDNA. The first step in the integration process is 3' processing. This step requires a complex comprising the viral genome, matrix protein and integrase. This complex is called the pre-integration complex (PIC). The integrase protein removes 2 nucleotides from each 3' end of the viral DNA, leaving recessed CA OH's at the 3' ends. In the second step that requires cell division, the PIC enters cell nucleus. In the third step, termed strand transfer, the integrase protein joins the previously processed 3' ends to the 5' ends of strands of target cellular DNA at the site of integration. The last step is viral DNA integration into host chromosome. This chain is Gag-Pol polyprotein (gag-pol), found in Cas-Br-E murine leukemia virus.